Consider the following 766-residue polypeptide: Serine/threonine-protein kinase PLK4 (766 aa).

A Protein kinase domain is found at 14-267; sequence YEVQHLLGKG…LEAVLCHPFM (254 aa). Residues 20–28 and Lys43 contribute to the ATP site; that span reads LGKGGFAIV. Asp138 (proton acceptor) is an active-site residue. A Cryptic POLO box 1 (CPB1) domain is found at 379-496; sequence EDRISVPPLN…ARFVGLVKSK (118 aa). Residues 497–600 enclose the Cryptic POLO box 2 (CPB2) domain; that stretch reads TPKVTYFSTL…GRRPVTDVQP (104 aa). Residues 658-737 form the POLO box domain; it reads PIKRINVPDV…IPNIQIKLKT (80 aa).

It belongs to the protein kinase superfamily. Ser/Thr protein kinase family. CDC5/Polo subfamily. In terms of assembly, homodimer. Post-translationally, ubiquitinated by the SCF(Slimb) ubiquitin ligase complex; leading to its degradation by the proteasome during interphase and regulating centriole number and ensuring the block to centriole reduplication.

The protein localises to the cytoplasm. Its subcellular location is the cytoskeleton. The protein resides in the microtubule organizing center. It localises to the centrosome. It is found in the centriole. It catalyses the reaction L-seryl-[protein] + ATP = O-phospho-L-seryl-[protein] + ADP + H(+). It carries out the reaction L-threonyl-[protein] + ATP = O-phospho-L-threonyl-[protein] + ADP + H(+). Serine/threonine-protein kinase that plays a central role in centriole duplication. Able to trigger procentriole formation on the surface of the mother centriole cylinder, using mother centriole as a platform, leading to the recruitment of centriole biogenesis proteins such as sas-6. When overexpressed, it is able to induce centrosome amplification through the simultaneous generation of multiple procentrioles adjoining each parental centriole during S phase. Centrosome amplification following overexpression can initiate tumorigenesis, highlighting the importance of centrosome regulation in cancers. The protein is Serine/threonine-protein kinase PLK4 (SAK) of Drosophila yakuba (Fruit fly).